Reading from the N-terminus, the 684-residue chain is Threonine--tRNA ligase (684 aa).

The TGS domain maps to 1 to 60; sequence MSISITLHRSGTSRTQQVDTTTTGLDLFGSDRAVVAMRVDGNLVDLQRELHDGAEVEPVE. The catalytic stretch occupies residues 256 to 567; that stretch reads DHRKLGAELD…LTEHYAGAFP (312 aa). Zn(2+)-binding residues include cysteine 361, histidine 412, and histidine 544.

Belongs to the class-II aminoacyl-tRNA synthetase family. As to quaternary structure, homodimer. It depends on Zn(2+) as a cofactor.

The protein resides in the cytoplasm. It carries out the reaction tRNA(Thr) + L-threonine + ATP = L-threonyl-tRNA(Thr) + AMP + diphosphate + H(+). Catalyzes the attachment of threonine to tRNA(Thr) in a two-step reaction: L-threonine is first activated by ATP to form Thr-AMP and then transferred to the acceptor end of tRNA(Thr). Also edits incorrectly charged L-seryl-tRNA(Thr). The chain is Threonine--tRNA ligase from Cutibacterium acnes (strain DSM 16379 / KPA171202) (Propionibacterium acnes).